Reading from the N-terminus, the 186-residue chain is Ribosome-recycling factor (186 aa).

Belongs to the RRF family.

It localises to the cytoplasm. Its function is as follows. Responsible for the release of ribosomes from messenger RNA at the termination of protein biosynthesis. May increase the efficiency of translation by recycling ribosomes from one round of translation to another. The sequence is that of Ribosome-recycling factor from Polynucleobacter asymbioticus (strain DSM 18221 / CIP 109841 / QLW-P1DMWA-1) (Polynucleobacter necessarius subsp. asymbioticus).